A 347-amino-acid polypeptide reads, in one-letter code: Globoside alpha-1,3-N-acetylgalactosaminyltransferase 1 (347 aa).

Residues 1–5 (MHRRR) lie on the Cytoplasmic side of the membrane. The helical; Signal-anchor for type II membrane protein transmembrane segment at 6–26 (LALGLGFCLLAGTSLSVLWVY) threads the bilayer. The Lumenal portion of the chain corresponds to 27-347 (LENWLPVSYV…LDKDISCLRS (321 aa)). Asn108 carries N-linked (GlcNAc...) asparagine glycosylation. Substrate is bound by residues 116–121 (FAVGKY), 206–208 (DVD), and 228–231 (HPSY). Residues Asp206 and Asp208 each contribute to the Mn(2+) site. Residue Glu298 is the Nucleophile of the active site.

Belongs to the glycosyltransferase 6 family. It depends on Mn(2+) as a cofactor. As to expression, widely expressed. Expressed at higher level in placenta, ovary and peripheral blood leukocyte, whereas it is weakly expressed in liver, thymus, and testis. Expressed in bone marrow erythroid cells.

The protein localises to the golgi apparatus membrane. Its pathway is protein modification; protein glycosylation. In terms of biological role, has lost the ability to synthesize Forssman glycolipid antigen (FORS1/FG). Might have acquired an alternative function in glycosphingolipid metabolism, but it remains to be established. It appears to have drifted more slowly than confirmed pseudogenes in the glycosyltransferase 6 family, suggesting that it has remained under evolutionary pressure. The polypeptide is Globoside alpha-1,3-N-acetylgalactosaminyltransferase 1 (Homo sapiens (Human)).